We begin with the raw amino-acid sequence, 245 residues long: Ninjurin-A (245 aa).

At 1–170 (MSNLEHITLE…TSSQHPYFYP (170 aa)) the chain is on the extracellular side. Asn-19 and Asn-28 each carry an N-linked (GlcNAc...) asparagine glycan. Residues 32–101 (HSYGGAIDGR…NVNVNVPNGG (70 aa)) are disordered. Residues 92–101 (NVNVNVPNGG) are compositionally biased toward low complexity. The helix alpha1 stretch occupies residues 135–146 (KKTLAQGMMDLA). The interval 149–165 (SANANQLRYVLETSSQH) is helix alpha2. A helical membrane pass occupies residues 171 to 191 (SLLFISLSIIFQIAVGVGLIL). At 192–211 (NGQYNIKNGHDICRANRINN) the chain is on the cytoplasmic side. Residues 212-232 (YTVSGIFIVTVVNVLISAFTV) traverse the membrane as a helical segment. Residues 233–245 (DRDTVPALPANTT) lie on the Extracellular side of the membrane.

Belongs to the ninjurin family. In terms of assembly, homooligomer. Post-translationally, cleaved by Mmp1 protease to generate the Secreted ninjurin-A form.

The protein resides in the cell membrane. It is found in the secreted. Its function is as follows. Effector of non-apoptotic necrotic cell death that mediates plasma membrane rupture (cytolysis): oligomerizes in response to death stimuli and promotes plasma membrane rupture by introducing hydrophilic faces of 2 alpha helices into the hydrophobic membrane, leading to release intracellular molecules that propagate the inflammatory response. Also acts as a homophilic transmembrane adhesion molecule that promotes cell adhesion by mediating homophilic interactions via its extracellular region. Functionally, secreted form generated by cleavage, which acts as a negative regulator of cell adhesion. Promotes the loss of cell adhesion in a cell non-autonomous manner. This is Ninjurin-A from Drosophila melanogaster (Fruit fly).